Reading from the N-terminus, the 614-residue chain is uncharacterized protein (614 aa).

Helical transmembrane passes span 41 to 61 (GWIF…AVLF), 87 to 107 (LIGM…ASAV), 157 to 177 (DTVL…ITSG), and 178 to 198 (VVLV…IILF). Positions 43–330 (IFLLAILTVG…IMWESARLFE (288 aa)) constitute an ABC transmembrane type-1 domain. One can recognise an ABC transporter domain in the interval 364-603 (IKFNDITFAY…NGLYAKLWNH (240 aa)). An ATP-binding site is contributed by 397-404 (GRSGAGKS).

Belongs to the ABC transporter superfamily.

The protein resides in the cell membrane. This is an uncharacterized protein from Haemophilus influenzae (strain ATCC 51907 / DSM 11121 / KW20 / Rd).